A 367-amino-acid polypeptide reads, in one-letter code: 4-hydroxy-3-methylbut-2-en-1-yl diphosphate synthase (flavodoxin) (367 aa).

Positions 268, 271, 303, and 310 each coordinate [4Fe-4S] cluster.

This sequence belongs to the IspG family. [4Fe-4S] cluster serves as cofactor.

The enzyme catalyses (2E)-4-hydroxy-3-methylbut-2-enyl diphosphate + oxidized [flavodoxin] + H2O + 2 H(+) = 2-C-methyl-D-erythritol 2,4-cyclic diphosphate + reduced [flavodoxin]. The protein operates within isoprenoid biosynthesis; isopentenyl diphosphate biosynthesis via DXP pathway; isopentenyl diphosphate from 1-deoxy-D-xylulose 5-phosphate: step 5/6. Functionally, converts 2C-methyl-D-erythritol 2,4-cyclodiphosphate (ME-2,4cPP) into 1-hydroxy-2-methyl-2-(E)-butenyl 4-diphosphate. The sequence is that of 4-hydroxy-3-methylbut-2-en-1-yl diphosphate synthase (flavodoxin) from Shouchella clausii (strain KSM-K16) (Alkalihalobacillus clausii).